We begin with the raw amino-acid sequence, 602 residues long: Wings apart-like protein homolog 1 (602 aa).

Residues 34–66 form a disordered region; that stretch reads NKQKRSPGQTVSKRLHKKQRVVSNPDLSLPSSP. Positions 54–66 are enriched in polar residues; it reads VVSNPDLSLPSSP. The 333-residue stretch at 160–492 folds into the WAPL domain; sequence IQMKSIHELR…LGLVEESHEF (333 aa).

Belongs to the WAPL family.

It localises to the nucleus. Its subcellular location is the chromosome. Its function is as follows. Regulator of sister chromatid cohesion in mitosis which negatively regulates cohesin association with chromatin. The sequence is that of Wings apart-like protein homolog 1 (wpl1) from Schizosaccharomyces pombe (strain 972 / ATCC 24843) (Fission yeast).